The sequence spans 607 residues: Tyrosine-protein kinase RYK (607 aa).

Positions 1 to 20 are disordered; that stretch reads MRGAARLGRPGRSCLPGARG. An N-terminal signal peptide occupies residues 1–25; sequence MRGAARLGRPGRSCLPGARGLRAPP. Residues 26–227 lie on the Extracellular side of the membrane; sequence PPPLLLLLAL…VHAAPTTSTR (202 aa). Residues 66–194 enclose the WIF domain; that stretch reads LYLSEDEVRR…VLNFKRRKMC (129 aa). Asn-139, Asn-174, Asn-178, Asn-182, and Asn-209 each carry an N-linked (GlcNAc...) asparagine glycan. Residues Cys-159 and Cys-194 are joined by a disulfide bond. The chain crosses the membrane as a helical span at residues 228 to 248; sequence VFYISVGVCCAVIFLVAIILA. The Cytoplasmic portion of the chain corresponds to 249–607; the sequence is VLHLHSMKRI…EFHAALGAYV (359 aa). Residues 266–282 are compositionally biased toward low complexity; that stretch reads ASSSSQGLSQPSTQTTQ. Positions 266–290 are disordered; that stretch reads ASSSSQGLSQPSTQTTQYLRADTPN. The region spanning 330–603 is the Protein kinase domain; sequence ITLKDVLQEG…QCLTEFHAAL (274 aa). ATP contacts are provided by residues 336-344 and Lys-364; that span reads LQEGTFGRI. Asp-465 (proton acceptor) is an active-site residue. Tyr-495 bears the Phosphotyrosine; by autocatalysis mark.

This sequence belongs to the protein kinase superfamily. Tyr protein kinase family. Interacts with DVL1 (via PDZ domain). In terms of processing, proteolytically cleaved, in part by presenilin, in response to WNT3 stimulation. Cleavage occurs during neuronal differentiation. As to expression, observed in all the tissues examined.

It is found in the membrane. Its subcellular location is the nucleus. The protein resides in the cytoplasm. It carries out the reaction L-tyrosyl-[protein] + ATP = O-phospho-L-tyrosyl-[protein] + ADP + H(+). May be a coreceptor along with FZD8 of Wnt proteins, such as WNT1, WNT3, WNT3A and WNT5A. Involved in neuron differentiation, axon guidance, corpus callosum establishment and neurite outgrowth. In response to WNT3 stimulation, receptor C-terminal cleavage occurs in its transmembrane region and allows the C-terminal intracellular product to translocate from the cytoplasm to the nucleus where it plays a crucial role in neuronal development. This Homo sapiens (Human) protein is Tyrosine-protein kinase RYK.